The primary structure comprises 700 residues: Polyribonucleotide nucleotidyltransferase (700 aa).

Positions 485 and 491 each coordinate Mg(2+). The KH domain maps to 552-611; that stretch reads PRITVIKINPEKIRDVIGKGGAVIRALTEETGTTIELEDDGTVKIASSNGEATKEAIRRI. The region spanning 621 to 689 is the S1 motif domain; sequence GRIYNGKVIR…RQGRVRLSIK (69 aa).

Belongs to the polyribonucleotide nucleotidyltransferase family. Component of the RNA degradosome, which is a multiprotein complex involved in RNA processing and mRNA degradation. Mg(2+) is required as a cofactor.

Its subcellular location is the cytoplasm. The catalysed reaction is RNA(n+1) + phosphate = RNA(n) + a ribonucleoside 5'-diphosphate. In terms of biological role, involved in mRNA degradation. Catalyzes the phosphorolysis of single-stranded polyribonucleotides processively in the 3'- to 5'-direction. The sequence is that of Polyribonucleotide nucleotidyltransferase from Shewanella baltica (strain OS185).